A 374-amino-acid chain; its full sequence is Chaperone protein DnaJ (374 aa).

The J domain occupies 5 to 69 (DYYEVLGVSK…DKKAKYDQFG (65 aa)). The CR-type zinc-finger motif lies at 141 to 223 (GVNKKTILNL…CHGKGVESKR (83 aa)). The Zn(2+) site is built by C154, C157, C171, C174, C197, C200, C211, and C214. CXXCXGXG motif repeat units lie at residues 154 to 161 (CTKCDGVG), 171 to 178 (CTKCNGAG), 197 to 204 (CDKCNGVG), and 211 to 218 (CKNCHGKG).

It belongs to the DnaJ family. Homodimer. The cofactor is Zn(2+).

It localises to the cytoplasm. Participates actively in the response to hyperosmotic and heat shock by preventing the aggregation of stress-denatured proteins and by disaggregating proteins, also in an autonomous, DnaK-independent fashion. Unfolded proteins bind initially to DnaJ; upon interaction with the DnaJ-bound protein, DnaK hydrolyzes its bound ATP, resulting in the formation of a stable complex. GrpE releases ADP from DnaK; ATP binding to DnaK triggers the release of the substrate protein, thus completing the reaction cycle. Several rounds of ATP-dependent interactions between DnaJ, DnaK and GrpE are required for fully efficient folding. Also involved, together with DnaK and GrpE, in the DNA replication of plasmids through activation of initiation proteins. This is Chaperone protein DnaJ from Mesoplasma florum (strain ATCC 33453 / NBRC 100688 / NCTC 11704 / L1) (Acholeplasma florum).